A 260-amino-acid polypeptide reads, in one-letter code: Triosephosphate isomerase (260 aa).

Asn11–Lys13 serves as a coordination point for substrate. His103 serves as the catalytic Electrophile. The active-site Proton acceptor is Glu175. Substrate contacts are provided by residues Gly181, Ser220, and Gly241–Gly242.

This sequence belongs to the triosephosphate isomerase family. Homodimer.

It is found in the cytoplasm. The catalysed reaction is D-glyceraldehyde 3-phosphate = dihydroxyacetone phosphate. Its pathway is carbohydrate biosynthesis; gluconeogenesis. It participates in carbohydrate degradation; glycolysis; D-glyceraldehyde 3-phosphate from glycerone phosphate: step 1/1. Functionally, involved in the gluconeogenesis. Catalyzes stereospecifically the conversion of dihydroxyacetone phosphate (DHAP) to D-glyceraldehyde-3-phosphate (G3P). The sequence is that of Triosephosphate isomerase from Shewanella sediminis (strain HAW-EB3).